Reading from the N-terminus, the 130-residue chain is Small ribosomal subunit protein uS9 (130 aa).

The protein belongs to the universal ribosomal protein uS9 family.

The chain is Small ribosomal subunit protein uS9 from Buchnera aphidicola subsp. Baizongia pistaciae (strain Bp).